The following is a 137-amino-acid chain: Protein cornichon homolog 4 (137 aa).

The next 3 helical transmembrane spans lie at 8–28, 53–73, and 113–133; these read LISFFFLIALVGIIVYQLVCL, FIVQGVLCVFYLLTGHWFMTL, and LAYIVLNLFLTIFWMIYSALD.

This sequence belongs to the cornichon family.

The protein localises to the membrane. The polypeptide is Protein cornichon homolog 4 (Arabidopsis thaliana (Mouse-ear cress)).